The chain runs to 476 residues: ATP synthase subunit beta (476 aa).

154-161 (GGAGVGKT) is an ATP binding site.

The protein belongs to the ATPase alpha/beta chains family. In terms of assembly, F-type ATPases have 2 components, CF(1) - the catalytic core - and CF(0) - the membrane proton channel. CF(1) has five subunits: alpha(3), beta(3), gamma(1), delta(1), epsilon(1). CF(0) has four main subunits: a(1), b(1), b'(1) and c(9-12).

The protein resides in the cell inner membrane. It carries out the reaction ATP + H2O + 4 H(+)(in) = ADP + phosphate + 5 H(+)(out). Functionally, produces ATP from ADP in the presence of a proton gradient across the membrane. The catalytic sites are hosted primarily by the beta subunits. The sequence is that of ATP synthase subunit beta from Rhodopseudomonas palustris (strain HaA2).